A 433-amino-acid chain; its full sequence is N-lysine methyltransferase SMYD2 (433 aa).

Residues 7–241 form the SET domain; sequence GGLERFCSAG…PGDEVFTSYI (235 aa). 17–19 provides a ligand contact to S-adenosyl-L-methionine; it reads KGR. Residues Cys52, Cys55, Cys65, Cys68, Cys74, Cys78, His86, and Cys90 each coordinate Zn(2+). The MYND-type zinc-finger motif lies at 52–90; it reads CECCFARKEGLSKCGRCKQAFYCDVECQKEDWPLHKLEC. Residues His137, 206-207, and 258-260 contribute to the S-adenosyl-L-methionine site; these read NH and YFF. The residue at position 283 (Ser283) is a Phosphoserine.

The protein belongs to the class V-like SAM-binding methyltransferase superfamily. In terms of assembly, interacts with RNA polymerase II and HELZ. Interacts with SIN3A and HDAC1. Interacts (via MYND-type zinc finger) with EPB41L3. Interacts (via SET domain) with p53/TP53. Interacts with RB1 and HSP90AA1.

It localises to the cytoplasm. Its subcellular location is the cytosol. The protein localises to the nucleus. The enzyme catalyses L-lysyl(4)-[histone H3] + 3 S-adenosyl-L-methionine = N(6),N(6),N(6)-trimethyl-L-lysyl(4)-[histone H3] + 3 S-adenosyl-L-homocysteine + 3 H(+). It carries out the reaction L-lysyl-[protein] + S-adenosyl-L-methionine = N(6)-methyl-L-lysyl-[protein] + S-adenosyl-L-homocysteine + H(+). Functionally, protein-lysine N-methyltransferase that methylates both histones and non-histone proteins, including p53/TP53 and RB1. Specifically trimethylates histone H3 'Lys-4' (H3K4me3) in vivo. The activity requires interaction with HSP90alpha. Shows even higher methyltransferase activity on p53/TP53. Monomethylates 'Lys-370' of p53/TP53, leading to decreased DNA-binding activity and subsequent transcriptional regulation activity of p53/TP53. Monomethylates RB1 at 'Lys-860'. This Rattus norvegicus (Rat) protein is N-lysine methyltransferase SMYD2 (Smyd2).